Consider the following 114-residue polypeptide: Phycoerythrin alpha-1 subunit (114 aa).

The (2R,3E)-phycoerythrobilin site is built by Asp52, Ser53, Glu63, Arg64, Cys67, Thr72, Lys74, Ala75, and Lys84.

It belongs to the phycoerythrin family. Heterotetramer of 2 different alpha chains and 2 identical beta chains which form 2 alpha-beta heterodimers within the heterotetramer. The two alpha-beta heterodimers are rotated to an open configuration in contrast to the closed configuration found in other cryptophyte species due to the insertion of a single amino acid, Asp-65, in a conserved region of the alpha chain. In the open form, the central chromophores are not in physical contact but are separated by a water-filled channel. Post-translationally, contains three phycoerythrobilin chromophores with binding mediated by both the alpha and beta subunits.

It localises to the plastid. It is found in the chloroplast thylakoid membrane. In terms of biological role, light-harvesting photosynthetic tetrapyrrole chromophore-protein from the phycobiliprotein complex. In Hemiselmis andersenii (Cryptophyte alga), this protein is Phycoerythrin alpha-1 subunit.